The chain runs to 360 residues: Polyamine aminopropyltransferase 2 (360 aa).

The PABS domain maps to 68–299 (DIWDEISLKE…TDWGFHIAAN (232 aa)). Glutamine 94 provides a ligand contact to S-methyl-5'-thioadenosine. 2 residues coordinate spermidine: histidine 123 and aspartate 147. S-methyl-5'-thioadenosine-binding positions include aspartate 167 and 201–202 (DA). Residue aspartate 219 is the Proton acceptor of the active site.

Belongs to the spermidine/spermine synthase family. As to quaternary structure, homodimer or homotetramer.

It localises to the cytoplasm. The enzyme catalyses S-adenosyl 3-(methylsulfanyl)propylamine + putrescine = S-methyl-5'-thioadenosine + spermidine + H(+). It functions in the pathway amine and polyamine biosynthesis; spermidine biosynthesis; spermidine from putrescine: step 1/1. In terms of biological role, catalyzes the irreversible transfer of a propylamine group from the amino donor S-adenosylmethioninamine (decarboxy-AdoMet) to putrescine (1,4-diaminobutane) to yield spermidine. This Bacillus anthracis protein is Polyamine aminopropyltransferase 2.